A 144-amino-acid polypeptide reads, in one-letter code: UPF0306 protein ESA_03544 (144 aa).

This sequence belongs to the UPF0306 family.

The polypeptide is UPF0306 protein ESA_03544 (Cronobacter sakazakii (strain ATCC BAA-894) (Enterobacter sakazakii)).